The primary structure comprises 302 residues: Citrate lyase subunit beta (302 aa).

Substrate-binding residues include arginine 69 and glutamate 132. Residues glutamate 132 and aspartate 159 each coordinate Mg(2+).

It belongs to the HpcH/HpaI aldolase family. Citrate lyase beta subunit subfamily. As to quaternary structure, oligomer with a subunit composition of (alpha,beta,gamma)6. Mg(2+) serves as cofactor.

The protein resides in the cytoplasm. The catalysed reaction is citrate = oxaloacetate + acetate. It carries out the reaction (3S)-citryl-CoA = oxaloacetate + acetyl-CoA. Functionally, represents a citryl-ACP lyase. This Leuconostoc mesenteroides subsp. cremoris protein is Citrate lyase subunit beta (citE).